The sequence spans 668 residues: uncharacterized protein (668 aa).

A run of 9 helical transmembrane segments spans residues 182-202, 208-228, 286-306, 321-341, 379-399, 430-450, 499-519, 557-577, and 587-607; these read FAFADFFKTGVFVLSFWGILG, PYSYIFAIGVALWGAFFIQFW, VPLFLISGCILLFLIAIAFIV, IVSLLPAVVFQVLTLPFTFIY, ALFLISYIYGPFAEYFVPHYI, IYFLTNAQVINYITILAVPQL, FVLMFGFLVMFSPIYPLAPIF, LSLLSWLGCITMPSICYFYSS, and VIAAVIGLLSEHLWFLLRMFI.

It localises to the membrane. This is an uncharacterized protein from Schizosaccharomyces pombe (strain 972 / ATCC 24843) (Fission yeast).